A 91-amino-acid chain; its full sequence is Bacterial microcompartment shell vertex protein PduN (91 aa).

One can recognise a BMV domain in the interval 1–87 (MHLARVTGAV…IDLAVVGIVD (87 aa)).

This sequence belongs to the CcmL/EutN family. Homopentamer. Interacts with shell protein PduA.

Its subcellular location is the bacterial microcompartment. Its pathway is polyol metabolism; 1,2-propanediol degradation. Its function is as follows. Probably forms vertices in the shell of the bacterial microcompartment (BMC) dedicated to 1,2-propanediol (1,2-PD) degradation. Required for structural integrity of BMCs and to mitigate propionaldehyde toxicity. In terms of biological role, the 1,2-PD-specific bacterial microcompartment (BMC) concentrates low levels of 1,2-PD catabolic enzymes, concentrates volatile reaction intermediates thus enhancing pathway flux and keeps the level of toxic, mutagenic propionaldehyde low. In Salmonella typhimurium (strain LT2 / SGSC1412 / ATCC 700720), this protein is Bacterial microcompartment shell vertex protein PduN.